Here is a 666-residue protein sequence, read N- to C-terminus: NAD(P)H-quinone oxidoreductase subunit 5, organellar chromatophore 1 (666 aa).

Helical transmembrane passes span leucine 8–isoleucine 28, alanine 41–alanine 61, valine 90–valine 110, serine 121–leucine 141, leucine 145–phenylalanine 165, phenylalanine 190–alanine 210, glycine 220–alanine 240, threonine 259–alanine 279, isoleucine 293–glutamine 313, leucine 328–isoleucine 348, glycine 396–tryptophan 416, serine 428–phenylalanine 448, threonine 497–tryptophan 517, phenylalanine 542–isoleucine 562, and glycine 643–phenylalanine 663.

The protein belongs to the complex I subunit 5 family. As to quaternary structure, NDH is composed of at least 16 different subunits, 5 of which are encoded in the nucleus.

It is found in the plastid. Its subcellular location is the organellar chromatophore thylakoid membrane. It catalyses the reaction a plastoquinone + NADH + (n+1) H(+)(in) = a plastoquinol + NAD(+) + n H(+)(out). It carries out the reaction a plastoquinone + NADPH + (n+1) H(+)(in) = a plastoquinol + NADP(+) + n H(+)(out). NDH shuttles electrons from NAD(P)H:plastoquinone, via FMN and iron-sulfur (Fe-S) centers, to quinones in the photosynthetic chain and possibly in a chloroplast respiratory chain. The immediate electron acceptor for the enzyme in this species is believed to be plastoquinone. Couples the redox reaction to proton translocation, and thus conserves the redox energy in a proton gradient. This Paulinella chromatophora protein is NAD(P)H-quinone oxidoreductase subunit 5, organellar chromatophore 1 (ndhF1).